The chain runs to 396 residues: MTAFRTLDDADLADKRVLVRVDLNVPMESGRVTDETRLKAILPTIRTITDKGGKAVLLAHFGRPKGRDESQSLAPVAKALEGQLGRKVAFASDCVGEEASSAISRLAAGEVIVLENTRFHAGEEKNAPDFVEALASLGDIYVNDAFSAAHRAHASTEGLARKLPAYAGRSMESELAALTKALEAPVRPVLAVVGGSKVSSKLELLGNLVKKVDILVIAGGMANTFLAALGKKVGKSLCEHDLADTAREILEKAKAAGCEIVLPVDAVVAKEFKANAANRVVSVDEVGDDEMILDAGPETVAVVAQKLDGAKTVVWNGPFGAFEMTPFDAATVAVARDVGKRTRAGTLLSVAGGGDTVAALNHAGVAGDFSYVSTAGGAFLEWLEGKALPGVEALRR.

Residues 22 to 24 (DLN), R37, 60 to 63 (HFGR), R118, and R151 each bind substrate. Residues K201, E323, and 353–356 (GGDT) contribute to the ATP site.

Belongs to the phosphoglycerate kinase family. Monomer.

The protein localises to the cytoplasm. It catalyses the reaction (2R)-3-phosphoglycerate + ATP = (2R)-3-phospho-glyceroyl phosphate + ADP. It functions in the pathway carbohydrate degradation; glycolysis; pyruvate from D-glyceraldehyde 3-phosphate: step 2/5. The protein is Phosphoglycerate kinase of Xanthobacter autotrophicus (strain ATCC BAA-1158 / Py2).